The following is a 361-amino-acid chain: Mitogen-activated protein kinase 14A (361 aa).

Residues 25–309 form the Protein kinase domain; that stretch reads YQNLSPVGSG…AAEALAHPYF (285 aa). ATP contacts are provided by residues 31 to 39 and K54; that span reads VGSGAYGTV. D151 (proton acceptor) is an active-site residue. Position 181 is a phosphothreonine; by MAP2K6 (T181). The TXY motif lies at 181–183; the sequence is TGY. Y183 carries the post-translational modification Phosphotyrosine; by MAP2K6.

This sequence belongs to the protein kinase superfamily. CMGC Ser/Thr protein kinase family. MAP kinase subfamily. Mg(2+) serves as cofactor. In terms of processing, dually phosphorylated on Thr-181 and Tyr-183, which activates the enzyme. In terms of tissue distribution, exclusively expressed in the ovary.

The protein resides in the cytoplasm. It is found in the nucleus. It catalyses the reaction L-seryl-[protein] + ATP = O-phospho-L-seryl-[protein] + ADP + H(+). It carries out the reaction L-threonyl-[protein] + ATP = O-phospho-L-threonyl-[protein] + ADP + H(+). Activated by threonine and tyrosine phosphorylation by the dual specificity kinase, MKK6. Its function is as follows. Serine/threonine kinase which acts as an essential component of the MAP kinase signal transduction pathway. Mapk14a is one of the four p38 MAPKs which play an important role in the cascades of cellular responses evoked by extracellular stimuli such as pro-inflammatory cytokines or physical stress leading to direct activation of transcription factors. Accordingly, p38 MAPKs phosphorylate a broad range of proteins and it has been estimated that they may have approximately 200 to 300 substrates each. Some of the targets are downstream kinases which are activated through phosphorylation and further phosphorylate additional targets. The chain is Mitogen-activated protein kinase 14A (mapk14a) from Cyprinus carpio (Common carp).